Consider the following 823-residue polypeptide: Ankyrin repeat domain-containing protein 20A1 (823 aa).

5 ANK repeats span residues glutamine 66–valine 95, glutamate 99–leucine 128, tyrosine 132–alanine 161, aspartate 165–alanine 194, and leucine 198–alanine 227. Disordered stretches follow at residues valine 301–aspartate 343 and valine 355–asparagine 402. A compositionally biased stretch (basic and acidic residues) spans glutamine 372–glutamine 384. Coiled-coil stretches lie at residues lysine 431 to glutamate 480, glutamate 565 to threonine 724, and leucine 776 to glutamate 805.

The protein is Ankyrin repeat domain-containing protein 20A1 (ANKRD20A1) of Homo sapiens (Human).